The chain runs to 313 residues: Tyrosine recombinase XerC (313 aa).

The region spanning 1-85 is the Core-binding (CB) domain; the sequence is MNDQVEAFLR…AVKSFFAFLT (85 aa). The 186-residue stretch at 106–291 folds into the Tyr recombinase domain; it reads DLPRALTPHQ…NHASSAQPVR (186 aa). Active-site residues include Arg147, Lys171, His243, Arg246, and His269. The O-(3'-phospho-DNA)-tyrosine intermediate role is filled by Tyr278.

Belongs to the 'phage' integrase family. XerC subfamily. In terms of assembly, forms a cyclic heterotetrameric complex composed of two molecules of XerC and two molecules of XerD.

The protein localises to the cytoplasm. Functionally, site-specific tyrosine recombinase, which acts by catalyzing the cutting and rejoining of the recombining DNA molecules. The XerC-XerD complex is essential to convert dimers of the bacterial chromosome into monomers to permit their segregation at cell division. It also contributes to the segregational stability of plasmids. In Roseiflexus sp. (strain RS-1), this protein is Tyrosine recombinase XerC.